A 300-amino-acid chain; its full sequence is Forkhead transcription factor fkh-9 (300 aa).

Positions 66-161 form a DNA-binding region, fork-head; it reads RPSLSYKDLI…DKQTLRRRNR (96 aa). The disordered stretch occupies residues 153 to 208; the sequence is KQTLRRRNRQQPRALAKKSDAGRTLSRDDRGSSGSGETSPSPSQPSISPPNENPMP. Residues 169 to 183 are compositionally biased toward basic and acidic residues; sequence KKSDAGRTLSRDDRG. Over residues 187 to 198 the composition is skewed to low complexity; it reads SGETSPSPSQPS.

As to expression, expressed in mechanosensory neurons.

It localises to the nucleus. Its function is as follows. Transcription factor. Binds to the regulatory elements of genes that contain the sequence motif 5'-TTGTTTCT-3'. Involved in regulating intestinal transcription of vitellogenin vit-2, acting in concert with transcription factors elt-2, mab-3 and daf-16, and also the TGF-beta/Sma/Mab pathway. Functions downstream of the insulin/IGF-1-like signaling (IIS) mediated pathway, in regeneration of axons after injury and in short-term memory, perhaps acting in neurons, and in modulation of longevity, perhaps acting non-neuronally. Plays a role in the modulation of endoplasmic reticulum (ER) homeostasis during chemical and pathogen stress, including exposure to the Gram-negative bacterium P.aeruginosa. This is Forkhead transcription factor fkh-9 from Caenorhabditis elegans.